The sequence spans 425 residues: Glutamate-1-semialdehyde 2,1-aminomutase (425 aa).

K266 is subject to N6-(pyridoxal phosphate)lysine.

It belongs to the class-III pyridoxal-phosphate-dependent aminotransferase family. HemL subfamily. In terms of assembly, homodimer. The cofactor is pyridoxal 5'-phosphate.

It is found in the cytoplasm. The catalysed reaction is (S)-4-amino-5-oxopentanoate = 5-aminolevulinate. Its pathway is porphyrin-containing compound metabolism; protoporphyrin-IX biosynthesis; 5-aminolevulinate from L-glutamyl-tRNA(Glu): step 2/2. This chain is Glutamate-1-semialdehyde 2,1-aminomutase, found in Nitratidesulfovibrio vulgaris (strain DSM 19637 / Miyazaki F) (Desulfovibrio vulgaris).